The following is a 110-amino-acid chain: Serum amyloid A protein (110 aa).

Residues 73–110 (GGSGRGAEDSRADQAANEWGRSGKDPNHFRPHGLPDKY) are disordered. The span at 93-110 (RSGKDPNHFRPHGLPDKY) shows a compositional bias: basic and acidic residues.

It belongs to the SAA family. Post-translationally, this protein is the precursor of amyloid protein A, which is formed by the removal of residues from the C-terminal end. In terms of tissue distribution, expressed by the liver; secreted in plasma.

Major acute phase reactant. Apolipoprotein of the HDL complex. In Equus caballus (Horse), this protein is Serum amyloid A protein (SAA1).